The chain runs to 141 residues: Drosulfakinins (141 aa).

The N-terminal stretch at 1–33 (MGLRSCTHLATLFMTLWALAFCFLVVVPIPAQT) is a signal peptide. Positions 34–73 (TSLQNAKDDRRLQELESKIGAESDQPNANLVGPSFSRFGD) are excised as a propeptide. The segment at 51–72 (KIGAESDQPNANLVGPSFSRFG) is disordered. F82 bears the Phenylalanine amide mark. Residues 86–111 (VPLISRPMIPIELDLLMDNDDERTKA) constitute a propeptide that is removed on maturation. Position 117 is a sulfotyrosine (Y117). F122 is modified (phenylalanine amide). Y134 carries the post-translational modification Sulfotyrosine. F139 is subject to Phenylalanine amide.

It belongs to the gastrin/cholecystokinin family.

It localises to the secreted. Functionally, drosulfakinin-0 (DSK 0) plays diverse biological roles including regulating gut muscle contraction in adults but not in larvae. This Drosophila mauritiana (Fruit fly) protein is Drosulfakinins.